A 129-amino-acid polypeptide reads, in one-letter code: Protein GLUTAMINE DUMPER 2 (129 aa).

The Extracellular segment spans residues 1-34 (MQTMEGRQYNYQDSINASSSMVVPHSPWHSPVPY). A helical transmembrane segment spans residues 35–55 (LFGGLAAMLALICVALLILAC). Residues 56-129 (SYWRLSGSAE…DHNEEEGRRG (74 aa)) lie on the Cytoplasmic side of the membrane. A disordered region spans residues 66 to 89 (RDLEAGDDAKPDNDTNKTKHTEMP). The VIMAG motif lies at 94–98 (VIMAG). A disordered region spans residues 106–129 (ATPATRSEQSCTCGDHNEEEGRRG). Residues 120–129 (DHNEEEGRRG) are compositionally biased toward basic and acidic residues.

This sequence belongs to the GLUTAMINE DUMPER 1 (TC 9.B.60) family. Expressed in the vascular tissues.

The protein localises to the membrane. In terms of biological role, probable subunit of an amino acid transporter involved in the regulation of the amino acid metabolism. Stimulates amino acid export by activating nonselective amino acid facilitators. The polypeptide is Protein GLUTAMINE DUMPER 2 (GDU2) (Arabidopsis thaliana (Mouse-ear cress)).